The sequence spans 397 residues: MHNLVILGASGSIGQSTLKVLRHNPGRWQVLALTAARSVEAMLRDCLEFSPRFAVMVDEAAASELAAQLKTHGSATRVMAGPAALCEVAAHPDAHSVMAAIVGAAGLAPTMAAVRAGKRILLANKEALVMSGAFFMEAVREHGAELLPIDSEHNAIFQCLPEAIQRQPGFCDLAGAGISKILLTGSGGPFRYTDIGELAHVTPAQAIAHPNWSMGAKISVDSATMINKGLEYIEARWLFNAAPEQIQVVIHPQSVIHSMVQYKDGSVLAQLGNPDMCTPIAHALAYPARVESGVEPLDFFSVGEFSFIRPDYERYPCLQLAMHACQQGQAATTALNAANEEAVAAFLAERIGFMDIARVNEATMLALGGTAAGSLDDLIALDGAARARAHNLIEELS.

Residues serine 10, glycine 11, serine 12, isoleucine 13, alanine 36, arginine 37, and asparagine 124 each coordinate NADPH. 1-deoxy-D-xylulose 5-phosphate is bound at residue lysine 125. Residue glutamate 126 coordinates NADPH. Position 150 (aspartate 150) interacts with Mn(2+). Positions 151, 152, 186, and 209 each coordinate 1-deoxy-D-xylulose 5-phosphate. Position 152 (glutamate 152) interacts with Mn(2+). NADPH is bound at residue glycine 215. 1-deoxy-D-xylulose 5-phosphate contacts are provided by serine 222, asparagine 227, lysine 228, and glutamate 231. Glutamate 231 contacts Mn(2+).

The protein belongs to the DXR family. Mg(2+) is required as a cofactor. It depends on Mn(2+) as a cofactor.

It catalyses the reaction 2-C-methyl-D-erythritol 4-phosphate + NADP(+) = 1-deoxy-D-xylulose 5-phosphate + NADPH + H(+). The protein operates within isoprenoid biosynthesis; isopentenyl diphosphate biosynthesis via DXP pathway; isopentenyl diphosphate from 1-deoxy-D-xylulose 5-phosphate: step 1/6. Functionally, catalyzes the NADPH-dependent rearrangement and reduction of 1-deoxy-D-xylulose-5-phosphate (DXP) to 2-C-methyl-D-erythritol 4-phosphate (MEP). This chain is 1-deoxy-D-xylulose 5-phosphate reductoisomerase, found in Aeromonas hydrophila subsp. hydrophila (strain ATCC 7966 / DSM 30187 / BCRC 13018 / CCUG 14551 / JCM 1027 / KCTC 2358 / NCIMB 9240 / NCTC 8049).